The sequence spans 228 residues: Adapter protein MecA (228 aa).

The protein belongs to the MecA family. Homodimer.

Functionally, enables the recognition and targeting of unfolded and aggregated proteins to the ClpC protease or to other proteins involved in proteolysis. This Lacticaseibacillus paracasei (strain ATCC 334 / BCRC 17002 / CCUG 31169 / CIP 107868 / KCTC 3260 / NRRL B-441) (Lactobacillus paracasei) protein is Adapter protein MecA.